A 423-amino-acid polypeptide reads, in one-letter code: MVSNQDYTERIRDLMKDHNSWMESSINLIASENITSSRVKEALISDLSHRYAEGLPGERLYEGCRYIDEIEEITIELSKKLFRAEHANVQPTSGVVANLACFFATADVGDPMMAMEVPYGGHISHAKVSAAGVRGFKIYTHPFDFENMNIDADAMKKKILEVKPRIILFGGSLFLFPHPVEEAVEAAEEVGARIMYDGAHVLGLIAGGYFQDPLREGADMLVGSTHKTFPGPQGGIILCREELADDIDEAVFPGLVSNHHLHHVAGLGIATAEMLEFGSEYAAQTIRNAKKLAENLNELGFNVLCEHLDFTESHQVVMDVSDIGRAAEISKKLEANNIILNKNLLPWDDVNRSDDPSGIRIGTQEITRRGMKESEMSEVAEYIKKVVIDGRNVKEEVSEFMSSYTKVHYAFEESGAYKYMEIL.

121 to 123 (GHI) contacts (6S)-5,6,7,8-tetrahydrofolate. Position 227 is an N6-(pyridoxal phosphate)lysine (Lys227). Residue Glu242 participates in (6S)-5,6,7,8-tetrahydrofolate binding.

The protein belongs to the SHMT family. As to quaternary structure, homodimer. Pyridoxal 5'-phosphate is required as a cofactor.

Its subcellular location is the cytoplasm. It carries out the reaction 5,10-methylenetetrahydromethanopterin + glycine + H2O = 5,6,7,8-tetrahydromethanopterin + L-serine. Its pathway is amino-acid biosynthesis; glycine biosynthesis; glycine from L-serine: step 1/1. In terms of biological role, catalyzes the reversible interconversion of serine and glycine with tetrahydromethanopterin (H4MPT) serving as the one-carbon carrier. Also exhibits a pteridine-independent aldolase activity toward beta-hydroxyamino acids, producing glycine and aldehydes, via a retro-aldol mechanism. This chain is Serine hydroxymethyltransferase, found in Methanothermobacter marburgensis (strain ATCC BAA-927 / DSM 2133 / JCM 14651 / NBRC 100331 / OCM 82 / Marburg) (Methanobacterium thermoautotrophicum).